Here is a 664-residue protein sequence, read N- to C-terminus: Protein SIEVE ELEMENT OCCLUSION C (664 aa).

The chain is Protein SIEVE ELEMENT OCCLUSION C from Arabidopsis thaliana (Mouse-ear cress).